The sequence spans 694 residues: Cyclic nucleotide-gated channel alpha-3 (694 aa).

2 stretches are compositionally biased toward polar residues: residues 1-11 (MAKINTQYSHP) and 112-123 (SQESNAQANVGS). Disordered regions lie at residues 1-24 (MAKINTQYSHPSRTHLKVKTSDRD) and 109-152 (EVSS…EEKK). The Cytoplasmic segment spans residues 1–170 (MAKINTQYSH…VDPSSNLYYR (170 aa)). The chain crosses the membrane as a helical span at residues 171–192 (WLTAIALPVFYNWYLLICRACF). Over 193–198 (DELQSE) the chain is Extracellular. Residues 199 to 219 (YLMLWLVLDYSADVLYVLDVL) form a helical membrane-spanning segment. Topologically, residues 220–246 (VRARTGFLEQGLMVSDTNRLWQHYKTT) are cytoplasmic. Residues 247-266 (TQFKLDVLSLVPTDLAYLKV) traverse the membrane as a helical segment. Residues 267-270 (GTNY) lie on the Extracellular side of the membrane. The chain crosses the membrane as a helical span at residues 271–288 (PEVRFNRLLKFSRLFEFF). Topologically, residues 289–298 (DRTETRTNYP) are cytoplasmic. Positions 298-406 (PNMFRIGNLV…GNVGSMISNM (109 aa)) are ion conduction pathway. Residues 299–321 (NMFRIGNLVLYILIIIHWNACIY) traverse the membrane as a helical segment. Topologically, residues 322 to 347 (FAISKFIGFGTDSWVYPNISIPEHGR) are extracellular. An N-linked (GalNAc...) asparagine glycan is attached at Asn-339. The next 2 membrane-spanning stretches (helical) occupy residues 348-378 (LSRKYIYSLYWSTLTLTTIGETPPPVKDEEY) and 379-403 (LFVVVDFLVGVLIFATIVGNVGSMI). The interval 365–368 (TIGE) is selectivity filter. Over 404–694 (SNMNASRAEF…DATKTEDKQQ (291 aa)) the chain is Cytoplasmic. The tract at residues 408-485 (ASRAEFQAKI…TLKKVRIFQD (78 aa)) is C-linker. The segment at 488–608 (AGLLVELVLK…EEKGRQILMK (121 aa)) is cyclic nucleotide-binding domain. 6 residues coordinate 3',5'-cyclic GMP: Gly-548, Glu-549, Ser-551, Arg-564, Thr-565, and Asp-609. Positions 626 to 669 (LEEKVEQLGSSLDTLQTRFARLLAEYNATQMKMKQRLSQLESQV) form a coiled coil. The interval 662–694 (LSQLESQVKGGGDKPLADGEVPGDATKTEDKQQ) is disordered.

This sequence belongs to the cyclic nucleotide-gated cation channel (TC 1.A.1.5) family. CNGA3 subfamily. As to quaternary structure, forms heterotetrameric channels composed of CNGA3 and CNGB3 subunits with 3:1 stoichiometry. Prominently expressed in retina.

It is found in the cell membrane. It catalyses the reaction Ca(2+)(in) = Ca(2+)(out). The catalysed reaction is Na(+)(in) = Na(+)(out). It carries out the reaction K(+)(in) = K(+)(out). The enzyme catalyses NH4(+)(in) = NH4(+)(out). It catalyses the reaction Rb(+)(in) = Rb(+)(out). The catalysed reaction is Li(+)(in) = Li(+)(out). It carries out the reaction Cs(+)(in) = Cs(+)(out). With respect to regulation, inhibited by L-cis-diltiazem. Functionally, pore-forming subunit of the cone cyclic nucleotide-gated channel. Mediates cone photoresponses at bright light converting transient changes in intracellular cGMP levels into electrical signals. In the dark, cGMP levels are high and keep the channel open enabling a steady inward current carried by Na(+) and Ca(2+) ions that leads to membrane depolarization and neurotransmitter release from synaptic terminals. Upon photon absorption cGMP levels decline leading to channel closure and membrane hyperpolarization that ultimately slows neurotransmitter release and signals the presence of light, the end point of the phototransduction cascade. Pore-forming subunit of the gustatory cyclic nucleotide-gated channel. In the taste buds, may sense oral extracellular pH and conduct ion currents that modulate the excitability of taste cells. Conducts cGMP- and cAMP-gated ion currents, with permeability for monovalent and divalent cations. The protein is Cyclic nucleotide-gated channel alpha-3 of Homo sapiens (Human).